The primary structure comprises 414 residues: Carboxynorspermidine synthase (414 aa).

It belongs to the saccharopine dehydrogenase family. Carboxynorspermidine synthase subfamily. As to quaternary structure, homodimer.

The enzyme catalyses carboxynorspermidine + NADP(+) + H2O = L-aspartate 4-semialdehyde + propane-1,3-diamine + NADPH + H(+). It carries out the reaction carboxyspermidine + NADP(+) + H2O = L-aspartate 4-semialdehyde + putrescine + NADPH + H(+). With respect to regulation, activated by dithiothreitol and inhibited by SH-reactive compounds. Involved in norspermidine biosynthesis. Catalyzes the synthesis of carboxynorspermidine from L-aspartate 4-semialdehyde and 1,3-diaminopropane. Is also slightly active with putrescine as a substrate. The chain is Carboxynorspermidine synthase from Vibrio alginolyticus (strain ATCC 17749 / DSM 2171 / NBRC 15630 / NCIMB 1903 / NCTC 12160 / XII-53).